The primary structure comprises 543 residues: Probable protein kinase UbiB (543 aa).

Positions 123-501 (DFDIVPLASA…KRQQAKGQFL (379 aa)) constitute a Protein kinase domain. Residues 129 to 137 (LASASIAQV) and Lys152 contribute to the ATP site. Residue Asp287 is the Proton acceptor of the active site. A helical transmembrane segment spans residues 517 to 539 (TSNITALASISAATGVTFWLLSW).

This sequence belongs to the ABC1 family. UbiB subfamily.

Its subcellular location is the cell inner membrane. The protein operates within cofactor biosynthesis; ubiquinone biosynthesis [regulation]. Is probably a protein kinase regulator of UbiI activity which is involved in aerobic coenzyme Q (ubiquinone) biosynthesis. The protein is Probable protein kinase UbiB of Aliivibrio salmonicida (strain LFI1238) (Vibrio salmonicida (strain LFI1238)).